Here is a 335-residue protein sequence, read N- to C-terminus: Holliday junction branch migration complex subunit RuvB (335 aa).

Residues 4–184 (ADRIISGQAK…FGIVQRLEFY (181 aa)) are large ATPase domain (RuvB-L). ATP contacts are provided by residues Ile-23, Arg-24, Gly-65, Lys-68, Thr-69, Thr-70, 131-133 (EDY), Arg-174, Tyr-184, and Arg-221. Thr-69 contributes to the Mg(2+) binding site. The tract at residues 185–255 (SVEDLTSIVA…VAKQALSMLD (71 aa)) is small ATPAse domain (RuvB-S). The head domain (RuvB-H) stretch occupies residues 258–335 (DAGFDYLDRK…RHFGLQKLSD (78 aa)). DNA is bound by residues Arg-294, Arg-313, and Arg-318.

It belongs to the RuvB family. As to quaternary structure, homohexamer. Forms an RuvA(8)-RuvB(12)-Holliday junction (HJ) complex. HJ DNA is sandwiched between 2 RuvA tetramers; dsDNA enters through RuvA and exits via RuvB. An RuvB hexamer assembles on each DNA strand where it exits the tetramer. Each RuvB hexamer is contacted by two RuvA subunits (via domain III) on 2 adjacent RuvB subunits; this complex drives branch migration. In the full resolvosome a probable DNA-RuvA(4)-RuvB(12)-RuvC(2) complex forms which resolves the HJ.

The protein resides in the cytoplasm. It catalyses the reaction ATP + H2O = ADP + phosphate + H(+). Functionally, the RuvA-RuvB-RuvC complex processes Holliday junction (HJ) DNA during genetic recombination and DNA repair, while the RuvA-RuvB complex plays an important role in the rescue of blocked DNA replication forks via replication fork reversal (RFR). RuvA specifically binds to HJ cruciform DNA, conferring on it an open structure. The RuvB hexamer acts as an ATP-dependent pump, pulling dsDNA into and through the RuvAB complex. RuvB forms 2 homohexamers on either side of HJ DNA bound by 1 or 2 RuvA tetramers; 4 subunits per hexamer contact DNA at a time. Coordinated motions by a converter formed by DNA-disengaged RuvB subunits stimulates ATP hydrolysis and nucleotide exchange. Immobilization of the converter enables RuvB to convert the ATP-contained energy into a lever motion, pulling 2 nucleotides of DNA out of the RuvA tetramer per ATP hydrolyzed, thus driving DNA branch migration. The RuvB motors rotate together with the DNA substrate, which together with the progressing nucleotide cycle form the mechanistic basis for DNA recombination by continuous HJ branch migration. Branch migration allows RuvC to scan DNA until it finds its consensus sequence, where it cleaves and resolves cruciform DNA. This Haemophilus influenzae (strain 86-028NP) protein is Holliday junction branch migration complex subunit RuvB.